We begin with the raw amino-acid sequence, 828 residues long: Class I hydrophobin hum3 (828 aa).

The first 22 residues, 1–22 (MKYLQFLAAVAAVSAFSGPVLA), serve as a signal peptide directing secretion. N-linked (GlcNAc...) asparagine glycosylation is found at Asn-156, Asn-222, and Asn-738. 4 disulfides stabilise this stretch: Cys-750/Cys-808, Cys-757/Cys-802, Cys-758/Cys-788, and Cys-809/Cys-822. An N-linked (GlcNAc...) asparagine glycan is attached at Asn-811.

This sequence in the C-terminal section; belongs to the fungal hydrophobin family. In terms of assembly, self-assembles to form functional amyloid fibrils called rodlets. Self-assembly into fibrillar rodlets occurs spontaneously at hydrophobic:hydrophilic interfaces and the rodlets further associate laterally to form amphipathic monolayers. In terms of processing, hum3 is an atypical hydrophobin that consists in a repetitive repellent-like region that spans 578 aa which is separated from a hydrophobin-like domain by a spacer region containing three possible kex2 processing sites. The repetitive region contains 17 amphipathic repeats of 31-36 aa each of them with a C-terminal putative kex2 processing motif.

Its subcellular location is the secreted. The protein localises to the cell wall. Aerial growth, conidiation, and dispersal of filamentous fungi in the environment rely upon a capability of their secreting small amphipathic proteins called hydrophobins (HPBs) with low sequence identity. Class I can self-assemble into an outermost layer of rodlet bundles on aerial cell surfaces, conferring cellular hydrophobicity that supports fungal growth, development and dispersal; whereas Class II form highly ordered films at water-air interfaces through intermolecular interactions but contribute nothing to the rodlet structure. Atypical class I hydrophobin that is preceded by a signal sequence and 17 imperfect repeats. The repeated peptides might function as repellents whereas the class I hydrophobin seems not to be crucial for the formation of aerial hyphae. Hydrophobins of Mycosarcoma maydis have been functionally replaced, at least partially, by repellents. Hum3 and rsp1 together are pathogenicity proteins that share an essential function in early stages of the infection. This is Class I hydrophobin hum3 from Mycosarcoma maydis (Corn smut fungus).